The following is a 121-amino-acid chain: Small ribosomal subunit protein uS13 (121 aa).

Positions 92-121 are disordered; sequence RRGLPVRGQNSKNNARTRKGPKRTVANKKK. The span at 106 to 121 shows a compositional bias: basic residues; that stretch reads ARTRKGPKRTVANKKK.

Belongs to the universal ribosomal protein uS13 family. In terms of assembly, part of the 30S ribosomal subunit. Forms a loose heterodimer with protein S19. Forms two bridges to the 50S subunit in the 70S ribosome.

Functionally, located at the top of the head of the 30S subunit, it contacts several helices of the 16S rRNA. In the 70S ribosome it contacts the 23S rRNA (bridge B1a) and protein L5 of the 50S subunit (bridge B1b), connecting the 2 subunits; these bridges are implicated in subunit movement. Contacts the tRNAs in the A and P-sites. The chain is Small ribosomal subunit protein uS13 from Shouchella clausii (strain KSM-K16) (Alkalihalobacillus clausii).